The sequence spans 71 residues: Small ribosomal subunit protein bS18 (71 aa).

It belongs to the bacterial ribosomal protein bS18 family. As to quaternary structure, part of the 30S ribosomal subunit. Forms a tight heterodimer with protein bS6.

Functionally, binds as a heterodimer with protein bS6 to the central domain of the 16S rRNA, where it helps stabilize the platform of the 30S subunit. The polypeptide is Small ribosomal subunit protein bS18 (Synechococcus elongatus (strain ATCC 33912 / PCC 7942 / FACHB-805) (Anacystis nidulans R2)).